The following is a 642-amino-acid chain: A-kinase anchor protein 8-like (642 aa).

The tract at residues 1–269 (MSYTGFVQGS…MRRTWKTWTT (269 aa)) is sufficient for activation of CTE-mediated expression. Residue Arg-209 is modified to Asymmetric dimethylarginine; alternate. An Omega-N-methylarginine; alternate modification is found at Arg-209. Omega-N-methylarginine occurs at positions 218, 238, and 248. Lys-258 carries the N6-acetyllysine modification. The disordered stretch occupies residues 265–382 (KTWTTADFRT…QDKQKKRQRD (118 aa)). Thr-268 carries the post-translational modification Phosphothreonine. The short motif at 275–280 (KKKKRK) is the Nuclear localization signal element. Positions 281 to 297 (QGGSPDEPDSKATRTDC) match the Nuclear export signal (NES) motif. Phosphoserine is present on Ser-284. Over residues 288–297 (PDSKATRTDC) the composition is skewed to basic and acidic residues. A Phosphothreonine modification is found at Thr-293. A Phosphoserine modification is found at Ser-298. Positions 299–315 (DNSDSDNDEGTEGEAAE) are enriched in acidic residues. Over residues 338-350 (EDGREEGKEDPEK) the composition is skewed to basic and acidic residues. A Nuclear localization signal motif is present at residues 363-365 (KRK). 2 consecutive C2H2 AKAP95-type zinc fingers follow at residues 392–414 (CSLCKYRTFYEDEMGSHLDSKFH) and 485–508 (CAACDLFIPMQFGIIQKHLKTMDH). Positions 546–642 (GENPFTDNPE…EDDEEGGGGP (97 aa)) are disordered. Over residues 553–564 (NPEEEKEQDEVE) the composition is skewed to acidic residues. Over residues 585 to 605 (AQPPVPLEPAPGTTTPPPPPP) the composition is skewed to pro residues. The segment covering 631-642 (DMEDDEEGGGGP) has biased composition (acidic residues).

Belongs to the AKAP95 family. Interacts (via N-terminus) with DHX9 (via RGG region). Interacts with TMPO isoform Beta, PRPF40A, RNF43, lamin-B. Interacts with HDAC3; increased during mitosis. Phosphorylated on serine or threonine residues possibly by PKA.

It localises to the nucleus. It is found in the nucleus matrix. The protein resides in the nucleus speckle. The protein localises to the PML body. Its subcellular location is the cytoplasm. Could play a role in constitutive transport element (CTE)-mediated gene expression by association with DHX9. Increases CTE-dependent nuclear unspliced mRNA export. Proposed to target PRKACA to the nucleus but does not seem to be implicated in the binding of regulatory subunit II of PKA. May be involved in nuclear envelope breakdown and chromatin condensation. May be involved in anchoring nuclear membranes to chromatin in interphase and in releasing membranes from chromating at mitosis. May regulate the initiation phase of DNA replication when associated with TMPO isoform Beta. Required for cell cycle G2/M transition and histone deacetylation during mitosis. In mitotic cells recruits HDAC3 to the vicinity of chromatin leading to deacetylation and subsequent phosphorylation at 'Ser-10' of histone H3; in this function seems to act redundantly with AKAP8. May be involved in regulation of pre-mRNA splicing. The polypeptide is A-kinase anchor protein 8-like (Akap8l) (Mus musculus (Mouse)).